Consider the following 735-residue polypeptide: Protostadienol synthase A (735 aa).

The stretch at 129–170 is one PFTB 1 repeat; that stretch reads KNEMIRYLLNFVNEDGGWGLWINSPSTVFGTTMNYTMLRILG. Residue Asp-460 is the Proton donor of the active site. PFTB repeat units lie at residues 487 to 528, 564 to 604, and 613 to 660; these read LAEA…YDNV, MARC…ETVG, and CRNA…ALMG.

It belongs to the terpene cyclase/mutase family.

The enzyme catalyses (S)-2,3-epoxysqualene = (17Z)-protosta-17(20),24-dien-3beta-ol. Its function is as follows. Protostadienol synthase which cyclizes (3S)-oxidosqualene to (17Z)-protosta-17(20),24-dien-3-beta-ol (protostadienol), the biosynthetic precursor of helvolic acid, a secondary metabolite which promotes virulence. This Arthroderma gypseum (strain ATCC MYA-4604 / CBS 118893) (Microsporum gypseum) protein is Protostadienol synthase A (PDSA).